The chain runs to 2194 residues: Glutamate synthase [NADH], amyloplastic (2194 aa).

Residues Met-1–Ser-101 constitute an amyloplast transit peptide. The active-site Nucleophile is the Cys-102. The Glutamine amidotransferase type-2 domain maps to Cys-102–Glu-503. A disordered region spans residues Gly-1021–Asn-1045. An FMN-binding site is contributed by Leu-1193–Arg-1250. [3Fe-4S] cluster-binding residues include Cys-1246, Cys-1252, and Cys-1257. Gly-1974–Arg-1988 contacts NAD(+).

This sequence belongs to the glutamate synthase family. As to quaternary structure, monomer. [3Fe-4S] cluster is required as a cofactor. Requires FAD as cofactor. It depends on FMN as a cofactor. Expressed in infected cells in root nodules. Barely detected in roots and stems.

Its subcellular location is the plastid. It localises to the amyloplast. It carries out the reaction 2 L-glutamate + NAD(+) = L-glutamine + 2-oxoglutarate + NADH + H(+). Its pathway is amino-acid biosynthesis; L-glutamate biosynthesis via GLT pathway; L-glutamate from 2-oxoglutarate and L-glutamine (NAD(+) route): step 1/1. The protein operates within energy metabolism; nitrogen metabolism. With respect to regulation, inhibited by malate, citrate, glutamate, NAD(+) and azaserine, but not by 2-2' dipyridil and N-ethylmaleimide. Required for the assimilation of symbiotically fixed nitrogen into amino acids in root nodules. The sequence is that of Glutamate synthase [NADH], amyloplastic from Medicago sativa (Alfalfa).